Consider the following 308-residue polypeptide: Mu-like prophage FluMu major head subunit (308 aa).

To phage Mu protein T.

The protein is Mu-like prophage FluMu major head subunit of Haemophilus influenzae (strain ATCC 51907 / DSM 11121 / KW20 / Rd).